Consider the following 610-residue polypeptide: Elongation factor 4 (610 aa).

In terms of domain architecture, tr-type G spans 11-193; it reads ENIRNFSIIA…QIVEKVPAPS (183 aa). Residues 23-28 and 140-143 each bind GTP; these read DHGKST and NKID.

Belongs to the TRAFAC class translation factor GTPase superfamily. Classic translation factor GTPase family. LepA subfamily.

It is found in the cell membrane. The enzyme catalyses GTP + H2O = GDP + phosphate + H(+). Its function is as follows. Required for accurate and efficient protein synthesis under certain stress conditions. May act as a fidelity factor of the translation reaction, by catalyzing a one-codon backward translocation of tRNAs on improperly translocated ribosomes. Back-translocation proceeds from a post-translocation (POST) complex to a pre-translocation (PRE) complex, thus giving elongation factor G a second chance to translocate the tRNAs correctly. Binds to ribosomes in a GTP-dependent manner. The sequence is that of Elongation factor 4 from Streptococcus equi subsp. zooepidemicus (strain H70).